The following is a 101-amino-acid chain: Small ribosomal subunit protein uS14 (101 aa).

The protein belongs to the universal ribosomal protein uS14 family. As to quaternary structure, part of the 30S ribosomal subunit. Contacts proteins S3 and S10.

Its function is as follows. Binds 16S rRNA, required for the assembly of 30S particles and may also be responsible for determining the conformation of the 16S rRNA at the A site. In Aeromonas salmonicida (strain A449), this protein is Small ribosomal subunit protein uS14.